The sequence spans 476 residues: Glycogen synthase (476 aa).

An ADP-alpha-D-glucose-binding site is contributed by K15.

Belongs to the glycosyltransferase 1 family. Bacterial/plant glycogen synthase subfamily.

The catalysed reaction is [(1-&gt;4)-alpha-D-glucosyl](n) + ADP-alpha-D-glucose = [(1-&gt;4)-alpha-D-glucosyl](n+1) + ADP + H(+). It functions in the pathway glycan biosynthesis; glycogen biosynthesis. Functionally, synthesizes alpha-1,4-glucan chains using ADP-glucose. The sequence is that of Glycogen synthase from Streptococcus gordonii (strain Challis / ATCC 35105 / BCRC 15272 / CH1 / DL1 / V288).